We begin with the raw amino-acid sequence, 89 residues long: Small ribosomal subunit protein uS15 (89 aa).

This sequence belongs to the universal ribosomal protein uS15 family. In terms of assembly, part of the 30S ribosomal subunit. Forms a bridge to the 50S subunit in the 70S ribosome, contacting the 23S rRNA.

Its function is as follows. One of the primary rRNA binding proteins, it binds directly to 16S rRNA where it helps nucleate assembly of the platform of the 30S subunit by binding and bridging several RNA helices of the 16S rRNA. Forms an intersubunit bridge (bridge B4) with the 23S rRNA of the 50S subunit in the ribosome. In Enterobacter sp. (strain 638), this protein is Small ribosomal subunit protein uS15.